Here is a 251-residue protein sequence, read N- to C-terminus: Probable transcriptional regulatory protein MRA_2631 (251 aa).

The protein belongs to the TACO1 family.

It is found in the cytoplasm. In Mycobacterium tuberculosis (strain ATCC 25177 / H37Ra), this protein is Probable transcriptional regulatory protein MRA_2631.